Here is a 993-residue protein sequence, read N- to C-terminus: Lateral signaling target protein 2 homolog (993 aa).

Disordered stretches follow at residues 340 to 449 (DQRN…DTTD), 494 to 623 (DGYG…TVVQ), 759 to 813 (GARH…GDQE), and 825 to 902 (AVNE…PPAW). Residues 343-360 (NNNNNINNNSSSSSNSNS) show a composition bias toward low complexity. Positions 372–405 (RSPSMLSLSTASPTPSHSIGSTFSAATSSTNPPV) are enriched in polar residues. Acidic residues predominate over residues 409 to 448 (DGDDADDDDDGDDDDEDDDDDVDDDLVGNDDSDDDDDDTT). Residues Ser525 and Ser526 each carry the phosphoserine modification. The segment covering 535-549 (SHNNTTTIKSPDSDG) has biased composition (polar residues). Positions 559–608 (SRQRHSHHHHRHHHHHHRHSSHSSHSHHHQHQQHHSQPHPHRTTRSGRKR) are enriched in basic residues. Positions 759–801 (GARHSAGASMQRNHTTIDNNNSTSSSPPDATITTTTTTTTTRS) are enriched in low complexity. Position 808 is a phosphoserine (Ser808). Low complexity-rich tracts occupy residues 842 to 862 (SNTPSSASSSATSSSSEQNSP) and 884 to 896 (TTATTTTTTGTGT). An FYVE-type zinc finger spans residues 905 to 965 (DGKAPRCMSC…VCRDCYAREI (61 aa)). 8 residues coordinate Zn(2+): Cys911, Cys914, Cys927, Cys930, Cys935, Cys938, Cys957, and Cys960. A disordered region spans residues 968 to 993 (SGGGGGGVVQMQRQQAANRPQTASAS). Residues 978 to 993 (MQRQQAANRPQTASAS) are compositionally biased toward polar residues.

The protein belongs to the lst-2 family.

Functionally, negative regulator of epidermal growth factor receptor (EGFR) signaling. This chain is Lateral signaling target protein 2 homolog, found in Drosophila willistoni (Fruit fly).